Consider the following 186-residue polypeptide: Potassium-transporting ATPase KdpC subunit (186 aa).

Residues 10–30 (LTIITMVLCGFLFPLAITLIG) traverse the membrane as a helical segment.

Belongs to the KdpC family. The system is composed of three essential subunits: KdpA, KdpB and KdpC.

The protein localises to the cell membrane. In terms of biological role, part of the high-affinity ATP-driven potassium transport (or Kdp) system, which catalyzes the hydrolysis of ATP coupled with the electrogenic transport of potassium into the cytoplasm. This subunit acts as a catalytic chaperone that increases the ATP-binding affinity of the ATP-hydrolyzing subunit KdpB by the formation of a transient KdpB/KdpC/ATP ternary complex. The chain is Potassium-transporting ATPase KdpC subunit from Staphylococcus aureus (strain bovine RF122 / ET3-1).